Here is a 181-residue protein sequence, read N- to C-terminus: Cytidylate kinase (181 aa).

Position 12–20 (12–20) interacts with ATP; the sequence is GLAGSGTTT.

The protein belongs to the cytidylate kinase family. Type 2 subfamily.

The protein localises to the cytoplasm. It carries out the reaction CMP + ATP = CDP + ADP. The enzyme catalyses dCMP + ATP = dCDP + ADP. In Pyrococcus abyssi (strain GE5 / Orsay), this protein is Cytidylate kinase (cmk).